Reading from the N-terminus, the 201-residue chain is FMN-dependent NADH:quinone oxidoreductase (201 aa).

FMN-binding positions include Ser9 and 16–18 (SYS).

Belongs to the azoreductase type 1 family. Homodimer. FMN is required as a cofactor.

It carries out the reaction 2 a quinone + NADH + H(+) = 2 a 1,4-benzosemiquinone + NAD(+). It catalyses the reaction N,N-dimethyl-1,4-phenylenediamine + anthranilate + 2 NAD(+) = 2-(4-dimethylaminophenyl)diazenylbenzoate + 2 NADH + 2 H(+). Functionally, quinone reductase that provides resistance to thiol-specific stress caused by electrophilic quinones. In terms of biological role, also exhibits azoreductase activity. Catalyzes the reductive cleavage of the azo bond in aromatic azo compounds to the corresponding amines. The sequence is that of FMN-dependent NADH:quinone oxidoreductase from Mesomycoplasma hyopneumoniae (strain 7448) (Mycoplasma hyopneumoniae).